Reading from the N-terminus, the 100-residue chain is uncharacterized protein (100 aa).

The chain crosses the membrane as a helical span at residues I62–Y82.

The protein localises to the membrane. This is an uncharacterized protein from Dictyostelium discoideum (Social amoeba).